A 160-amino-acid chain; its full sequence is Small ribosomal subunit protein uS19 (160 aa).

The protein belongs to the universal ribosomal protein uS19 family.

Its function is as follows. Protein S19 forms a complex with S13 that binds strongly to the 16S ribosomal RNA. This is Small ribosomal subunit protein uS19 from Pyrobaculum islandicum (strain DSM 4184 / JCM 9189 / GEO3).